Here is a 298-residue protein sequence, read N- to C-terminus: UDP-N-acetylenolpyruvoylglucosamine reductase (298 aa).

The FAD-binding PCMH-type domain occupies 26 to 191 (KTGGAADVFV…LDATFSLALE (166 aa)). Arg-170 is a catalytic residue. Ser-220 acts as the Proton donor in catalysis. Glu-290 is an active-site residue.

This sequence belongs to the MurB family. FAD serves as cofactor.

The protein localises to the cytoplasm. It carries out the reaction UDP-N-acetyl-alpha-D-muramate + NADP(+) = UDP-N-acetyl-3-O-(1-carboxyvinyl)-alpha-D-glucosamine + NADPH + H(+). It functions in the pathway cell wall biogenesis; peptidoglycan biosynthesis. Cell wall formation. The polypeptide is UDP-N-acetylenolpyruvoylglucosamine reductase (Listeria monocytogenes serotype 4b (strain CLIP80459)).